Consider the following 461-residue polypeptide: ATP-dependent protease ATPase subunit HslU (461 aa).

ATP-binding positions include Ile18, 60–65 (GVGKTE), Asp274, Glu339, and Arg411.

Belongs to the ClpX chaperone family. HslU subfamily. In terms of assembly, a double ring-shaped homohexamer of HslV is capped on each side by a ring-shaped HslU homohexamer. The assembly of the HslU/HslV complex is dependent on binding of ATP.

It is found in the cytoplasm. Its function is as follows. ATPase subunit of a proteasome-like degradation complex; this subunit has chaperone activity. The binding of ATP and its subsequent hydrolysis by HslU are essential for unfolding of protein substrates subsequently hydrolyzed by HslV. HslU recognizes the N-terminal part of its protein substrates and unfolds these before they are guided to HslV for hydrolysis. This is ATP-dependent protease ATPase subunit HslU from Carboxydothermus hydrogenoformans (strain ATCC BAA-161 / DSM 6008 / Z-2901).